We begin with the raw amino-acid sequence, 189 residues long: Ras-like protein rasC (189 aa).

11 to 18 (GDGGVGKS) contributes to the GTP binding site. Residues 33 to 41 (YDPTIENSY) carry the Effector region motif. GTP contacts are provided by residues 58–62 (DTAGQ) and 117–120 (NKAD). At cysteine 186 the chain carries Cysteine methyl ester. Cysteine 186 carries the S-geranylgeranyl cysteine lipid modification. Positions 187-189 (IIL) are cleaved as a propeptide — removed in mature form.

Belongs to the small GTPase superfamily. Ras family.

It is found in the cell membrane. It catalyses the reaction GTP + H2O = GDP + phosphate + H(+). Alternates between an inactive form bound to GDP and an active form bound to GTP. Activated by a guanine nucleotide-exchange factor (GEF) and inactivated by a GTPase-activating protein (GAP). In terms of biological role, ras proteins bind GDP/GTP and possess intrinsic GTPase activity. This Dictyostelium discoideum (Social amoeba) protein is Ras-like protein rasC (rasC).